A 210-amino-acid polypeptide reads, in one-letter code: Selenoprotein T2 (210 aa).

An N-terminal signal peptide occupies residues 1–21 (MAEYSQTGILTALLLFTVVTV). Residues 62 to 65 (CISU) constitute a cross-link (cysteinyl-selenocysteine (Cys-Sec)). Sec-65 is a non-standard amino acid (selenocysteine).

This sequence belongs to the SelWTH family. Selenoprotein T subfamily. In terms of processing, may contain a selenide-sulfide bond between Cys-62 and Sec-65. This bond is speculated to serve as redox-active pair. In terms of tissue distribution, widely expressed in the embryo.

This chain is Selenoprotein T2, found in Danio rerio (Zebrafish).